The chain runs to 467 residues: Putative odorant receptor 85e (467 aa).

Residues 1 to 60 (MASLQFHGNVDADIRYDISLDPARESNLFRLLMGLQLANGTKPSPRLPKWWPKRLEMIGK) lie on the Cytoplasmic side of the membrane. Residues 61 to 81 (VLPKAYCSMVIFTSLHLGVLF) form a helical membrane-spanning segment. At 82-98 (TKTTLDVLPTGELQAIT) the chain is on the extracellular side. Residues 99–119 (DALTMTIIYFFTGYGTIYWCL) form a helical membrane-spanning segment. At 120–159 (RSRRLLAYMEHMNREYRHHSLAGVTFVSSHAAFRMSRNFT) the chain is on the cytoplasmic side. The helical transmembrane segment at 160–180 (VVWIMSCLLGVISWGVSPLML) threads the bilayer. At 181-212 (GIRMLPLQCWYPFDALGPGTYTAVYATQLFGQ) the chain is on the extracellular side. A helical transmembrane segment spans residues 213–233 (IMVGMTFGFGGSLFVTLSLLL). Residues 234-286 (LGQFDVLYCSLKNLDAHTKLLGGESVNGLSSLQEELLLGDSKRELNQYVLLQE) are Cytoplasmic-facing. Residues 287–307 (HPTDLLRLSAGRKCPDQGNAF) traverse the membrane as a helical segment. At 308-334 (HNALVECIRLHRFILHCSQELENLFSP) the chain is on the extracellular side. Residues 335–355 (YCLVKSLQITFQLCLLVFVGV) traverse the membrane as a helical segment. At 356 to 367 (SGTREVLRIVNQ) the chain is on the cytoplasmic side. The chain crosses the membrane as a helical span at residues 368 to 388 (LQYLGLTIFELLMFTYCGELL). Over 389 to 467 (SRHSIRSGDA…LAAKKTESEL (79 aa)) the chain is Extracellular.

This sequence belongs to the insect chemoreceptor superfamily. Heteromeric odorant receptor channel (TC 1.A.69) family. Or2a subfamily. Interacts with Orco. Complexes exist early in the endomembrane system in olfactory sensory neurons (OSNs), coupling these complexes to the conserved ciliary trafficking pathway. As to expression, expressed in 15% of the 120 sensory neurons within the maxillary palp.

Its subcellular location is the cell membrane. Odorant receptor which mediates acceptance or avoidance behavior, depending on its substrates. The odorant receptor repertoire encodes a large collection of odor stimuli that vary widely in identity, intensity, and duration. May form a complex with Orco to form odorant-sensing units, providing sensitive and prolonged odorant signaling and calcium permeability. The polypeptide is Putative odorant receptor 85e (Or85e) (Drosophila melanogaster (Fruit fly)).